A 491-amino-acid polypeptide reads, in one-letter code: MAESGESPRLSDELGPVDYLMHRGEANPRTRSGIMALELLDGTPDWDRFRTRFENASRRVLRLRQKVVVPTLPTAAPRWVVDPDFNLDFHVRRVRVSGPATLREVLDLAEVILQSPLDISRPLWTATLVEGMADGRAAMLLHVSHAVTDGVGGVEMFAQIYDLERDPPPRSTPPQPIPEDLSPNDLMRRGINHLPIAVVGGVLDALSGAVSMAGRAVLEPVSTVSGILGYARSGIRVLNRAAEPSPLLRRRSLTTRTEAIDIRLADLHKAAKAGGGSINDAYLAGLCGALRRYHEALGVPISTLPMAVPVNLRAEGDAAGGNQFTGVNLAAPVGTIDPVARMKKIRAQMTQRRDEPAMNIIGSIAPVLSVLPTAVLEGITGSVIGSDVQASNVPVYPGDTYLAGAKILRQYGIGPLPGVAMMVVLISRGGWCTVTVRYDRASVRNDELFAQCLQAGFDEILALAGGPAPRVLPASFDTQGAGSVPRSVSGS.

His-145 serves as the catalytic Proton acceptor.

Belongs to the long-chain O-acyltransferase family.

It catalyses the reaction an acyl-CoA + a 1,2-diacyl-sn-glycerol = a triacyl-sn-glycerol + CoA. Its pathway is glycerolipid metabolism; triacylglycerol biosynthesis. This Mycobacterium tuberculosis (strain CDC 1551 / Oshkosh) protein is Putative diacyglycerol O-acyltransferase MT2557.